Here is a 752-residue protein sequence, read N- to C-terminus: MSRTPLDTVEHAAATPDVELPWAELGLKKDEYERVVEILGRRPTGAELAMYSVMWSEHCSYKSSKVHLRQFGEKAPQSDALLVGIGENAGVVDVGQGYAVTFKVESHNHPSYVEPYQGAATGVGGIVRDIIAMGARPVAVVDPLRFGAADHPDTKRVLPGVVAGIGGYGNCLGLPNIGGEVVFDACYQGNPLVNAGAIGVMRHEDIHLAKASGAGNKVILYGARTGGDGIGGASILASETFDDAKPSKRPAVQVGDPFQEKLLIECTLEAFAEKLVVGIQDLGAAGLSCATSELASNGSGGMRVTLDDVPLRDSTLSPEEILMSESQERMCAVVEPEKVDRFLAICEKWDVIATVIGEVTDGDRLEIYWHGGKIVDVDPRTVAHDGPVYERPYARPEWQDALQADDANKLPRPSSSEELRDQVLKLVASPNQASKSWITSQYDHFVQGNTVLAQPEDSGMIRIDAESGLGVAIATDGNGRYAKLDPYAGAQLALSEAYRNVATTGAKPLAVSDCLNFGSPEDPAVMWQFAEAIRGLADACQQLGTPVTGGNVSLYNQTGEVAIHPTPVVAVLGVIDDVARRTPVAFQEEGQLLYLLGDTREEFGGSAWSQVVHDHLGGLPPQVDLERERLLGEILISASRDGMIDAAHDLSDGGLIQAVVESALLGGKGARLVVPDGLDAFTFLFSESAGRAVVAVPRSEELRFNDMCGARGLPVTRIGVVDGDSVEVQGEFTLPLAELRKAHEETIPALLA.

The active site involves H58. Y61 and K103 together coordinate ATP. E105 serves as a coordination point for Mg(2+). Residues 106-109 (SHNH) and R128 each bind substrate. The active-site Proton acceptor is H107. D129 is a binding site for Mg(2+). Q253 contributes to the substrate binding site. D281 lines the Mg(2+) pocket. A substrate-binding site is contributed by 325-327 (ESQ). Residues D513 and G550 each contribute to the ATP site. Position 551 (N551) interacts with Mg(2+). S553 lines the substrate pocket.

Belongs to the FGAMS family. In terms of assembly, monomer. Part of the FGAM synthase complex composed of 1 PurL, 1 PurQ and 2 PurS subunits.

The protein localises to the cytoplasm. It catalyses the reaction N(2)-formyl-N(1)-(5-phospho-beta-D-ribosyl)glycinamide + L-glutamine + ATP + H2O = 2-formamido-N(1)-(5-O-phospho-beta-D-ribosyl)acetamidine + L-glutamate + ADP + phosphate + H(+). It participates in purine metabolism; IMP biosynthesis via de novo pathway; 5-amino-1-(5-phospho-D-ribosyl)imidazole from N(2)-formyl-N(1)-(5-phospho-D-ribosyl)glycinamide: step 1/2. In terms of biological role, part of the phosphoribosylformylglycinamidine synthase complex involved in the purines biosynthetic pathway. Catalyzes the ATP-dependent conversion of formylglycinamide ribonucleotide (FGAR) and glutamine to yield formylglycinamidine ribonucleotide (FGAM) and glutamate. The FGAM synthase complex is composed of three subunits. PurQ produces an ammonia molecule by converting glutamine to glutamate. PurL transfers the ammonia molecule to FGAR to form FGAM in an ATP-dependent manner. PurS interacts with PurQ and PurL and is thought to assist in the transfer of the ammonia molecule from PurQ to PurL. The polypeptide is Phosphoribosylformylglycinamidine synthase subunit PurL (Streptomyces avermitilis (strain ATCC 31267 / DSM 46492 / JCM 5070 / NBRC 14893 / NCIMB 12804 / NRRL 8165 / MA-4680)).